The primary structure comprises 296 residues: Transmembrane protein 156 (296 aa).

Topologically, residues 1–4 (MTKT) are cytoplasmic. A helical transmembrane segment spans residues 5–25 (ALLKLFVAIVITFILILPEYF). The Extracellular segment spans residues 26 to 211 (KTPKERTLEL…EMDIKNITCS (186 aa)). 2 N-linked (GlcNAc...) asparagine glycosylation sites follow: Asn-45 and Asn-156. A helical transmembrane segment spans residues 212-232 (MKITWYILVLLVFIFLIILTI). Residues 233–296 (RKILEGQRRV…QEVLPPIPEL (64 aa)) lie on the Cytoplasmic side of the membrane.

Its subcellular location is the membrane. In Homo sapiens (Human), this protein is Transmembrane protein 156 (TMEM156).